A 268-amino-acid chain; its full sequence is Centromere protein Q (268 aa).

Residues 1-31 are disordered; sequence MSGKANASKKNFEQLKRNPKRKKDNEEVVLS. S31 carries the phosphoserine modification. Residues 170 to 203 adopt a coiled-coil conformation; that stretch reads ELMTGNIQSLKNKIQILASEVEEEEERVKQIHQI. Residue S249 is modified to Phosphoserine.

It belongs to the CENP-Q/OKP1 family. As to quaternary structure, component of the CENPA-CAD complex, composed of CENPI, CENPK, CENPL, CENPO, CENPP, CENPQ, CENPR and CENPS. The CENPA-CAD complex interacts with the CENPA-NAC complex, at least composed of CENPA, CENPC, CENPH, CENPM, CENPN, CENPT and CENPU.

Its subcellular location is the nucleus. The protein resides in the chromosome. It localises to the centromere. Functionally, component of the CENPA-CAD (nucleosome distal) complex, a complex recruited to centromeres which is involved in assembly of kinetochore proteins, mitotic progression and chromosome segregation. May be involved in incorporation of newly synthesized CENPA into centromeres via its interaction with the CENPA-NAC complex. Plays an important role in chromosome congression and in the recruitment of CENP-O complex (which comprises CENPO, CENPP, CENPQ and CENPU), CENPE and PLK1 to the kinetochores. This Macaca fascicularis (Crab-eating macaque) protein is Centromere protein Q (CENPQ).